Here is an 88-residue protein sequence, read N- to C-terminus: Putative transmembrane protein ORF24 (88 aa).

The next 3 membrane-spanning stretches (helical) occupy residues 16–36, 42–62, and 64–84; these read LNMG…WAGM, AVFV…VTQF, and FIWF…VASI.

It localises to the host membrane. The polypeptide is Putative transmembrane protein ORF24 (Haloarcula hispanica (His1V)).